The following is a 395-amino-acid chain: Formate-dependent phosphoribosylglycinamide formyltransferase (395 aa).

Residues 22–23 and Glu82 contribute to the N(1)-(5-phospho-beta-D-ribosyl)glycinamide site; that span reads EL. ATP contacts are provided by residues Arg115, Lys156, 161-166, 196-199, and Glu204; these read SSGKGQ and EGFI. The ATP-grasp domain occupies 120–309; it reads RLAAETLGLP…EFALHARAIL (190 aa). Residues Glu268 and Glu280 each coordinate Mg(2+). N(1)-(5-phospho-beta-D-ribosyl)glycinamide-binding positions include Asp287, Lys356, and 363-364; that span reads RR.

It belongs to the PurK/PurT family. As to quaternary structure, homodimer.

The catalysed reaction is N(1)-(5-phospho-beta-D-ribosyl)glycinamide + formate + ATP = N(2)-formyl-N(1)-(5-phospho-beta-D-ribosyl)glycinamide + ADP + phosphate + H(+). It functions in the pathway purine metabolism; IMP biosynthesis via de novo pathway; N(2)-formyl-N(1)-(5-phospho-D-ribosyl)glycinamide from N(1)-(5-phospho-D-ribosyl)glycinamide (formate route): step 1/1. Its function is as follows. Involved in the de novo purine biosynthesis. Catalyzes the transfer of formate to 5-phospho-ribosyl-glycinamide (GAR), producing 5-phospho-ribosyl-N-formylglycinamide (FGAR). Formate is provided by PurU via hydrolysis of 10-formyl-tetrahydrofolate. The sequence is that of Formate-dependent phosphoribosylglycinamide formyltransferase from Stenotrophomonas maltophilia (strain K279a).